Consider the following 208-residue polypeptide: Protein GrpE (208 aa).

Residues 1–12 are compositionally biased toward basic and acidic residues; it reads MTNKDESVEKNT. Residues 1-51 form a disordered region; the sequence is MTNKDESVEKNTESTVEETNVKQNIDDSVEQAEESKGHLQDEAIEETSDEN. Positions 13–23 are enriched in polar residues; the sequence is ESTVEETNVKQ. The span at 42–51 shows a compositional bias: acidic residues; it reads EAIEETSDEN.

Belongs to the GrpE family. As to quaternary structure, homodimer.

It localises to the cytoplasm. In terms of biological role, participates actively in the response to hyperosmotic and heat shock by preventing the aggregation of stress-denatured proteins, in association with DnaK and GrpE. It is the nucleotide exchange factor for DnaK and may function as a thermosensor. Unfolded proteins bind initially to DnaJ; upon interaction with the DnaJ-bound protein, DnaK hydrolyzes its bound ATP, resulting in the formation of a stable complex. GrpE releases ADP from DnaK; ATP binding to DnaK triggers the release of the substrate protein, thus completing the reaction cycle. Several rounds of ATP-dependent interactions between DnaJ, DnaK and GrpE are required for fully efficient folding. This is Protein GrpE from Staphylococcus aureus (strain USA300).